Consider the following 465-residue polypeptide: Ribulose bisphosphate carboxylase large chain (465 aa).

Position 4 is an N6,N6,N6-trimethyllysine (K4). Substrate contacts are provided by N113 and T163. K165 serves as the catalytic Proton acceptor. A substrate-binding site is contributed by K167. 3 residues coordinate Mg(2+): K191, D193, and E194. An N6-carboxylysine modification is found at K191. The Proton acceptor role is filled by H284. Substrate is bound by residues R285, H317, and S369.

The protein belongs to the RuBisCO large chain family. Type I subfamily. In terms of assembly, heterohexadecamer of 8 large chains and 8 small chains; disulfide-linked. The disulfide link is formed within the large subunit homodimers. It depends on Mg(2+) as a cofactor. The disulfide bond which can form in the large chain dimeric partners within the hexadecamer appears to be associated with oxidative stress and protein turnover.

It localises to the plastid. It is found in the chloroplast. It catalyses the reaction 2 (2R)-3-phosphoglycerate + 2 H(+) = D-ribulose 1,5-bisphosphate + CO2 + H2O. The enzyme catalyses D-ribulose 1,5-bisphosphate + O2 = 2-phosphoglycolate + (2R)-3-phosphoglycerate + 2 H(+). Functionally, ruBisCO catalyzes two reactions: the carboxylation of D-ribulose 1,5-bisphosphate, the primary event in carbon dioxide fixation, as well as the oxidative fragmentation of the pentose substrate in the photorespiration process. Both reactions occur simultaneously and in competition at the same active site. This chain is Ribulose bisphosphate carboxylase large chain, found in Ilex crenata (Japanese holly).